A 349-amino-acid chain; its full sequence is Glycerol-3-phosphate dehydrogenase [NAD(P)+] (349 aa).

3 residues coordinate NADPH: tryptophan 16, arginine 36, and lysine 110. Sn-glycerol 3-phosphate is bound by residues lysine 110, glycine 138, and threonine 140. Alanine 142 is a binding site for NADPH. Sn-glycerol 3-phosphate-binding residues include lysine 193, aspartate 246, serine 256, arginine 257, and asparagine 258. Lysine 193 serves as the catalytic Proton acceptor. Arginine 257 contributes to the NADPH binding site. 2 residues coordinate NADPH: valine 281 and glutamate 283.

Belongs to the NAD-dependent glycerol-3-phosphate dehydrogenase family.

The protein localises to the cytoplasm. The enzyme catalyses sn-glycerol 3-phosphate + NAD(+) = dihydroxyacetone phosphate + NADH + H(+). It catalyses the reaction sn-glycerol 3-phosphate + NADP(+) = dihydroxyacetone phosphate + NADPH + H(+). The protein operates within membrane lipid metabolism; glycerophospholipid metabolism. Functionally, catalyzes the reduction of the glycolytic intermediate dihydroxyacetone phosphate (DHAP) to sn-glycerol 3-phosphate (G3P), the key precursor for phospholipid synthesis. The protein is Glycerol-3-phosphate dehydrogenase [NAD(P)+] of Rhodospirillum rubrum (strain ATCC 11170 / ATH 1.1.1 / DSM 467 / LMG 4362 / NCIMB 8255 / S1).